The sequence spans 1203 residues: Regulator of telomere elongation helicase 1 (1203 aa).

The 290-residue stretch at 7–296 (NGVTVDFPFQ…ARVTQQGELQ (290 aa)) folds into the Helicase ATP-binding domain. Position 42–49 (42–49 (SPTGTGKT)) interacts with ATP. Positions 145, 163, 172, and 207 each coordinate [4Fe-4S] cluster. Residues 151-167 (KKQESNHMQISLCRKKV) carry the Nuclear localization signal motif. Positions 250–253 (DEAH) match the DEAH box motif. The Nuclear localization signal signature appears at 871-877 (QKGGRKK). Disordered regions lie at residues 998–1020 (QLDP…TSKG) and 1120–1203 (TTGK…RSKQ). Over residues 1004 to 1020 (HLNQGQPHLSAHPTSKG) the composition is skewed to polar residues. Positions 1123–1134 (KDLELEGPRDES) are enriched in basic and acidic residues. The short motif at 1160 to 1167 (QSKISSFF) is the PIP-box element. Basic and acidic residues predominate over residues 1169 to 1181 (QRPDESVRSDDTT).

The protein belongs to the helicase family. RAD3/XPD subfamily. In terms of assembly, interacts with TERF1. Interacts (via PIP-box) with PCNA; the interaction is direct and essential for suppressing telomere fragility. Interacts with MMS19; the interaction mediates the association of RTEL1 with the cytosolic iron-sulfur protein assembly (CIA) complex. Widely expressed. Expressed in spleen, thymus, Peyer patches, kidney, and intestine. Not expressed in brain, heart, lung, skeletal muscles, skin and white fat. In the adult gonad, it is highly expressed in the testis, mainly in the spermatogonia and meiotic spermatocytes.

The protein resides in the nucleus. It catalyses the reaction ATP + H2O = ADP + phosphate + H(+). In terms of biological role, a probable ATP-dependent DNA helicase implicated in telomere-length regulation, DNA repair and the maintenance of genomic stability. Acts as an anti-recombinase to counteract toxic recombination and limit crossover during meiosis. Regulates meiotic recombination and crossover homeostasis by physically dissociating strand invasion events and thereby promotes noncrossover repair by meiotic synthesis dependent strand annealing (SDSA) as well as disassembly of D loop recombination intermediates. Also disassembles T loops and prevents telomere fragility by counteracting telomeric G4-DNA structures, which together ensure the dynamics and stability of the telomere. This Mus musculus (Mouse) protein is Regulator of telomere elongation helicase 1.